The following is an 88-amino-acid chain: Meiosis expressed gene 1 protein homolog (88 aa).

Belongs to the MEIG1 family. In terms of assembly, interacts with PACRG. Interacts with MORN3.

Its function is as follows. Essential for spermiogenesis. This is Meiosis expressed gene 1 protein homolog from Homo sapiens (Human).